The sequence spans 269 residues: 4-hydroxy-tetrahydrodipicolinate reductase (269 aa).

Residue 11–16 (GPIGRM) participates in NAD(+) binding. Lysine 39 serves as a coordination point for NADP(+). Residues 101 to 103 (GTT) and 125 to 128 (ASNF) each bind NAD(+). The active-site Proton donor/acceptor is histidine 158. Histidine 159 lines the (S)-2,3,4,5-tetrahydrodipicolinate pocket. Lysine 162 (proton donor) is an active-site residue. 168 to 169 (GT) lines the (S)-2,3,4,5-tetrahydrodipicolinate pocket.

This sequence belongs to the DapB family. In terms of assembly, homotetramer.

Its subcellular location is the cytoplasm. It carries out the reaction (S)-2,3,4,5-tetrahydrodipicolinate + NAD(+) + H2O = (2S,4S)-4-hydroxy-2,3,4,5-tetrahydrodipicolinate + NADH + H(+). The catalysed reaction is (S)-2,3,4,5-tetrahydrodipicolinate + NADP(+) + H2O = (2S,4S)-4-hydroxy-2,3,4,5-tetrahydrodipicolinate + NADPH + H(+). Its pathway is amino-acid biosynthesis; L-lysine biosynthesis via DAP pathway; (S)-tetrahydrodipicolinate from L-aspartate: step 4/4. Its function is as follows. Catalyzes the conversion of 4-hydroxy-tetrahydrodipicolinate (HTPA) to tetrahydrodipicolinate. The sequence is that of 4-hydroxy-tetrahydrodipicolinate reductase from Buchnera aphidicola subsp. Acyrthosiphon pisum (strain 5A).